Reading from the N-terminus, the 273-residue chain is Bifunctional protein FolD (273 aa).

NADP(+)-binding positions include 152 to 154 (GRS), T179, and I220.

It belongs to the tetrahydrofolate dehydrogenase/cyclohydrolase family. Homodimer.

The catalysed reaction is (6R)-5,10-methylene-5,6,7,8-tetrahydrofolate + NADP(+) = (6R)-5,10-methenyltetrahydrofolate + NADPH. It carries out the reaction (6R)-5,10-methenyltetrahydrofolate + H2O = (6R)-10-formyltetrahydrofolate + H(+). The protein operates within one-carbon metabolism; tetrahydrofolate interconversion. Catalyzes the oxidation of 5,10-methylenetetrahydrofolate to 5,10-methenyltetrahydrofolate and then the hydrolysis of 5,10-methenyltetrahydrofolate to 10-formyltetrahydrofolate. This Petrotoga mobilis (strain DSM 10674 / SJ95) protein is Bifunctional protein FolD.